Consider the following 361-residue polypeptide: Chorismate synthase (361 aa).

NADP(+) is bound by residues arginine 48 and arginine 54. Residues 125-127, 238-239, glycine 278, 293-297, and arginine 319 each bind FMN; these read RSS, NA, and KPTSS.

Belongs to the chorismate synthase family. As to quaternary structure, homotetramer. Requires FMNH2 as cofactor.

It catalyses the reaction 5-O-(1-carboxyvinyl)-3-phosphoshikimate = chorismate + phosphate. The protein operates within metabolic intermediate biosynthesis; chorismate biosynthesis; chorismate from D-erythrose 4-phosphate and phosphoenolpyruvate: step 7/7. Its function is as follows. Catalyzes the anti-1,4-elimination of the C-3 phosphate and the C-6 proR hydrogen from 5-enolpyruvylshikimate-3-phosphate (EPSP) to yield chorismate, which is the branch point compound that serves as the starting substrate for the three terminal pathways of aromatic amino acid biosynthesis. This reaction introduces a second double bond into the aromatic ring system. In Salmonella dublin (strain CT_02021853), this protein is Chorismate synthase.